Reading from the N-terminus, the 428-residue chain is UPF0761 membrane protein TERTU_3006 (428 aa).

The next 7 helical transmembrane spans lie at 47–67, 104–124, 143–163, 189–209, 218–238, 248–268, and 292–312; these read LFAL…IPAF, LSGV…RNIE, YLLY…AFLL, VVPW…VPNC, IGGV…GYIV, GAFA…TIIL, and MIVV…GESV.

Belongs to the UPF0761 family.

The protein localises to the cell inner membrane. The chain is UPF0761 membrane protein TERTU_3006 from Teredinibacter turnerae (strain ATCC 39867 / T7901).